The primary structure comprises 352 residues: N-acetyl-gamma-glutamyl-phosphate reductase 1 (352 aa).

Belongs to the NAGSA dehydrogenase family. Type 1 subfamily.

The protein resides in the cytoplasm. The enzyme catalyses N-acetyl-L-glutamate 5-semialdehyde + phosphate + NADP(+) = N-acetyl-L-glutamyl 5-phosphate + NADPH + H(+). The protein operates within amino-acid biosynthesis; L-arginine biosynthesis; N(2)-acetyl-L-ornithine from L-glutamate: step 3/4. Functionally, catalyzes the NADPH-dependent reduction of N-acetyl-5-glutamyl phosphate to yield N-acetyl-L-glutamate 5-semialdehyde. This is N-acetyl-gamma-glutamyl-phosphate reductase 1 from Nostoc sp. (strain PCC 7120 / SAG 25.82 / UTEX 2576).